The following is a 130-amino-acid chain: Small ribosomal subunit protein uS9 (130 aa).

The protein belongs to the universal ribosomal protein uS9 family.

The polypeptide is Small ribosomal subunit protein uS9 (Yersinia enterocolitica serotype O:8 / biotype 1B (strain NCTC 13174 / 8081)).